A 149-amino-acid chain; its full sequence is MRVVVQRVKSSKVEVDGKIIGSIKGGLNVLLGICKGDTQKDIEYLVDKILGLRIFEDECGKMNKSLLDVKGELLVISQFTLYGDCRKGKRPSFIEALGGEEAKKLYEEFIKKCKEVLGEVQMGEFGADMLVSIENDGPVTLMIDSKKVF.

A Gly-cisPro motif, important for rejection of L-amino acids motif is present at residues 137 to 138 (GP).

The protein belongs to the DTD family. Homodimer.

Its subcellular location is the cytoplasm. The enzyme catalyses glycyl-tRNA(Ala) + H2O = tRNA(Ala) + glycine + H(+). It catalyses the reaction a D-aminoacyl-tRNA + H2O = a tRNA + a D-alpha-amino acid + H(+). Its function is as follows. An aminoacyl-tRNA editing enzyme that deacylates mischarged D-aminoacyl-tRNAs. Also deacylates mischarged glycyl-tRNA(Ala), protecting cells against glycine mischarging by AlaRS. Acts via tRNA-based rather than protein-based catalysis; rejects L-amino acids rather than detecting D-amino acids in the active site. By recycling D-aminoacyl-tRNA to D-amino acids and free tRNA molecules, this enzyme counteracts the toxicity associated with the formation of D-aminoacyl-tRNA entities in vivo and helps enforce protein L-homochirality. In Clostridium tetani (strain Massachusetts / E88), this protein is D-aminoacyl-tRNA deacylase.